Consider the following 145-residue polypeptide: MRVVLQRVKEASVTIEGQVVGQIGQGYLLLVGFGPDDTEETLDYMVHKITNLRVFESEPGKMNLGLKDVDGAILSVSQFTLYADVKHGNRPGFSNAAKPSLAEPLYQRFNEKLAATGIPVATGQFGADMQVALVNDGPVTIWYEK.

A Gly-cisPro motif, important for rejection of L-amino acids motif is present at residues 137-138; it reads GP.

This sequence belongs to the DTD family. As to quaternary structure, homodimer.

Its subcellular location is the cytoplasm. It carries out the reaction glycyl-tRNA(Ala) + H2O = tRNA(Ala) + glycine + H(+). The catalysed reaction is a D-aminoacyl-tRNA + H2O = a tRNA + a D-alpha-amino acid + H(+). An aminoacyl-tRNA editing enzyme that deacylates mischarged D-aminoacyl-tRNAs. Also deacylates mischarged glycyl-tRNA(Ala), protecting cells against glycine mischarging by AlaRS. Acts via tRNA-based rather than protein-based catalysis; rejects L-amino acids rather than detecting D-amino acids in the active site. By recycling D-aminoacyl-tRNA to D-amino acids and free tRNA molecules, this enzyme counteracts the toxicity associated with the formation of D-aminoacyl-tRNA entities in vivo and helps enforce protein L-homochirality. The sequence is that of D-aminoacyl-tRNA deacylase from Limosilactobacillus fermentum (strain NBRC 3956 / LMG 18251) (Lactobacillus fermentum).